A 58-amino-acid chain; its full sequence is Large ribosomal subunit protein bL32 (58 aa).

Belongs to the bacterial ribosomal protein bL32 family.

The chain is Large ribosomal subunit protein bL32 from Ligilactobacillus salivarius (strain UCC118) (Lactobacillus salivarius).